The sequence spans 309 residues: Homoserine kinase (309 aa).

91 to 101 (PIGSGLGSSAC) serves as a coordination point for ATP.

Belongs to the GHMP kinase family. Homoserine kinase subfamily.

The protein localises to the cytoplasm. It catalyses the reaction L-homoserine + ATP = O-phospho-L-homoserine + ADP + H(+). Its pathway is amino-acid biosynthesis; L-threonine biosynthesis; L-threonine from L-aspartate: step 4/5. Its function is as follows. Catalyzes the ATP-dependent phosphorylation of L-homoserine to L-homoserine phosphate. This chain is Homoserine kinase, found in Klebsiella pneumoniae subsp. pneumoniae (strain ATCC 700721 / MGH 78578).